Reading from the N-terminus, the 120-residue chain is uncharacterized protein (120 aa).

Residues 7–120 (VFAKIITKNL…KLIGLINNND (114 aa)) enclose the HIT domain. The Histidine triad motif motif lies at 101–105 (HFHFH).

This is an uncharacterized protein from Rickettsia prowazekii (strain Madrid E).